A 289-amino-acid polypeptide reads, in one-letter code: Phospholipase A1 (289 aa).

The signal sequence occupies residues 1–20 (MRTLQGWLLPVFMLPMAVYA). The Periplasmic portion of the chain corresponds to 21 to 52 (QEATVKEVHDAPAVRGSIIANMLQEHDNPFTL). The chain crosses the membrane as a beta stranded span at residues 53-65 (YPYDTNYLIYTQT). The Extracellular portion of the chain corresponds to 66–84 (SDLNKEAIASYDWAENARK). A beta stranded transmembrane segment spans residues 85-99 (DEVKFQLSLAFPLWR). Topologically, residues 100-105 (GILGPN) are periplasmic. A beta stranded membrane pass occupies residues 106 to 118 (SVLGASYTQKSWW). The Extracellular segment spans residues 119-128 (QLSNSEESSP). Ser-126 serves as a coordination point for Ca(2+). Residues 129–148 (FRETNYEPQLFLGFATDYRF) form a beta stranded membrane-spanning segment. Residues 149–150 (AG) lie on the Periplasmic side of the membrane. A beta stranded membrane pass occupies residues 151 to 164 (WTLRDVEMGYNHDS). His-162 (proton acceptor) is an active-site residue. Catalysis depends on Ser-164, which acts as the Nucleophile. Residues 165–173 (NGRSDPTSR) lie on the Extracellular side of the membrane. Residues Arg-167 and Ser-172 each contribute to the Ca(2+) site. Residues 174 to 186 (SWNRLYTRLMAEN) traverse the membrane as a beta stranded segment. Over 187-188 (GN) the chain is Periplasmic. A beta stranded transmembrane segment spans residues 189-198 (WLVEVKPWYV). Residues 199–216 (VGNTDDNPDITKYMGYYQ) lie on the Extracellular side of the membrane. Asp-204 serves as a coordination point for Ca(2+). A beta stranded membrane pass occupies residues 217–223 (LKIGYHL). Residues 224–225 (GD) lie on the Periplasmic side of the membrane. A beta stranded membrane pass occupies residues 226–234 (AVLSAKGQY). At 235-241 (NWNTGYG) the chain is on the extracellular side. The beta stranded transmembrane segment at 242 to 250 (GAELGLSYP) threads the bilayer. The Periplasmic segment spans residues 251–255 (ITKHV). The chain crosses the membrane as a beta stranded span at residues 256 to 265 (RLYTQVYSGY). The Extracellular segment spans residues 266-274 (GESLIDYNF). The chain crosses the membrane as a beta stranded span at residues 275–286 (NQTRVGVGVMLN). The Periplasmic portion of the chain corresponds to 287-289 (DLF).

The protein belongs to the phospholipase A1 family. Homodimer; dimerization is reversible, and the dimeric form is the active one. It depends on Ca(2+) as a cofactor.

Its subcellular location is the cell outer membrane. It carries out the reaction a 1,2-diacyl-sn-glycero-3-phosphocholine + H2O = a 2-acyl-sn-glycero-3-phosphocholine + a fatty acid + H(+). The enzyme catalyses a 1,2-diacyl-sn-glycero-3-phosphocholine + H2O = a 1-acyl-sn-glycero-3-phosphocholine + a fatty acid + H(+). Functionally, hydrolysis of phosphatidylcholine with phospholipase A2 (EC 3.1.1.4) and phospholipase A1 (EC 3.1.1.32) activities. The polypeptide is Phospholipase A1 (pldA) (Escherichia coli O157:H7).